The primary structure comprises 270 residues: Probable feruloyl esterase C (270 aa).

The first 21 residues, 1 to 21 (MIKSIILQAIMVLSTLTSVHG), serve as a signal peptide directing secretion. N-linked (GlcNAc...) asparagine glycosylation is present at N23.

It belongs to the faeC family.

Its subcellular location is the secreted. The catalysed reaction is feruloyl-polysaccharide + H2O = ferulate + polysaccharide.. Its function is as follows. Involved in degradation of plant cell walls. Hydrolyzes the feruloyl-arabinose ester bond in arabinoxylans, and the feruloyl-galactose ester bond in pectin. Active against paranitrophenyl-acetate, methyl ferulate and wheat arabinoxylan. The polypeptide is Probable feruloyl esterase C (faeC) (Aspergillus oryzae (strain ATCC 42149 / RIB 40) (Yellow koji mold)).